We begin with the raw amino-acid sequence, 107 residues long: ATP-dependent Clp protease adapter protein ClpS (107 aa).

Positions 1–12 (MSGDKDFDKDSD) are enriched in basic and acidic residues. Positions 1-21 (MSGDKDFDKDSDVTVITRTTP) are disordered.

This sequence belongs to the ClpS family. Binds to the N-terminal domain of the chaperone ClpA.

Functionally, involved in the modulation of the specificity of the ClpAP-mediated ATP-dependent protein degradation. The sequence is that of ATP-dependent Clp protease adapter protein ClpS from Zymomonas mobilis subsp. mobilis (strain ATCC 31821 / ZM4 / CP4).